The chain runs to 496 residues: Hexokinase-2 (496 aa).

The chain crosses the membrane as a helical span at residues 4 to 24 (ATVGAVVVGTAAAVAVAALIM). Residues 35–487 (ARARAILKEF…SGIGAALLAA (453 aa)) enclose the Hexokinase domain. The hexokinase small subdomain stretch occupies residues 90–228 (TGDEGGVFYA…EIDMRVSALV (139 aa)). ADP-binding residues include Gly104, Thr105, and Asn106. 4 residues coordinate D-glucose: Thr194, Lys195, Asn229, and Asp230. The tract at residues 229–476 (NDTVGTLAGG…TSIVFKHAND (248 aa)) is hexokinase large subdomain. Position 253 (Thr253) interacts with ADP. 3 residues coordinate D-glucose: Asn256, Glu284, and Glu315. Residue Gly441 coordinates ADP.

It belongs to the hexokinase family.

The protein resides in the plastid. The protein localises to the chloroplast outer membrane. It carries out the reaction a D-hexose + ATP = a D-hexose 6-phosphate + ADP + H(+). The catalysed reaction is D-fructose + ATP = D-fructose 6-phosphate + ADP + H(+). It catalyses the reaction D-glucose + ATP = D-glucose 6-phosphate + ADP + H(+). Its pathway is carbohydrate metabolism; hexose metabolism. It functions in the pathway carbohydrate degradation; glycolysis; D-glyceraldehyde 3-phosphate and glycerone phosphate from D-glucose: step 1/4. Functionally, fructose and glucose phosphorylating enzyme. May be involved in the phosphorylation of glucose during the export from plastids to cytosol. Seems neither to be involved in cell sugar sensing nor in carbohydrate metabolism in tuber. This Solanum tuberosum (Potato) protein is Hexokinase-2 (HXK2).